The chain runs to 350 residues: Nicotinate-nucleotide--dimethylbenzimidazole phosphoribosyltransferase (350 aa).

The Proton acceptor role is filled by glutamate 317.

The protein belongs to the CobT family.

The enzyme catalyses 5,6-dimethylbenzimidazole + nicotinate beta-D-ribonucleotide = alpha-ribazole 5'-phosphate + nicotinate + H(+). Its pathway is nucleoside biosynthesis; alpha-ribazole biosynthesis; alpha-ribazole from 5,6-dimethylbenzimidazole: step 1/2. In terms of biological role, catalyzes the synthesis of alpha-ribazole-5'-phosphate from nicotinate mononucleotide (NAMN) and 5,6-dimethylbenzimidazole (DMB). This is Nicotinate-nucleotide--dimethylbenzimidazole phosphoribosyltransferase from Shewanella putrefaciens (strain CN-32 / ATCC BAA-453).